A 216-amino-acid polypeptide reads, in one-letter code: Large ribosomal subunit protein uL1 (216 aa).

Belongs to the universal ribosomal protein uL1 family. In terms of assembly, component of the large ribosomal subunit.

It localises to the cytoplasm. Component of the large ribosomal subunit. The ribosome is a large ribonucleoprotein complex responsible for the synthesis of proteins in the cell. The sequence is that of Large ribosomal subunit protein uL1 (rpl10a) from Ictalurus punctatus (Channel catfish).